Consider the following 462-residue polypeptide: L-seryl-tRNA(Sec) selenium transferase (462 aa).

K292 is modified (N6-(pyridoxal phosphate)lysine).

It belongs to the SelA family. Pyridoxal 5'-phosphate serves as cofactor.

The protein resides in the cytoplasm. The enzyme catalyses L-seryl-tRNA(Sec) + selenophosphate + H(+) = L-selenocysteinyl-tRNA(Sec) + phosphate. Its pathway is aminoacyl-tRNA biosynthesis; selenocysteinyl-tRNA(Sec) biosynthesis; selenocysteinyl-tRNA(Sec) from L-seryl-tRNA(Sec) (bacterial route): step 1/1. Functionally, converts seryl-tRNA(Sec) to selenocysteinyl-tRNA(Sec) required for selenoprotein biosynthesis. The chain is L-seryl-tRNA(Sec) selenium transferase from Geotalea uraniireducens (strain Rf4) (Geobacter uraniireducens).